Here is a 553-residue protein sequence, read N- to C-terminus: Rhodopsin kinase GRK7 (553 aa).

Ser36 carries the post-translational modification Phosphoserine; by PKA. The RGS domain maps to Phe56–Leu176. One can recognise a Protein kinase domain in the interval Phe191–Phe454. ATP-binding positions include Leu197–Val205 and Lys220. Asp316 serves as the catalytic Proton acceptor. The AGC-kinase C-terminal domain occupies Lys455–Glu520. Cys550 is modified (cysteine methyl ester). Cys550 carries the S-geranylgeranyl cysteine lipid modification. Residues Leu551 to Leu553 constitute a propeptide, removed in mature form.

Belongs to the protein kinase superfamily. AGC Ser/Thr protein kinase family. GPRK subfamily. Interacts (when prenylated) with PDE6D; this promotes release from membranes. Autophosphorylated in vitro at Ser-490. Phosphorylation at Ser-36 is regulated by light and activated by cAMP. In terms of tissue distribution, retinal cones, outer and inner segments.

The protein resides in the membrane. The enzyme catalyses L-threonyl-[rhodopsin] + ATP = O-phospho-L-threonyl-[rhodopsin] + ADP + H(+). It carries out the reaction L-seryl-[rhodopsin] + ATP = O-phospho-L-seryl-[rhodopsin] + ADP + H(+). With respect to regulation, inhibited by phosphorylation of Ser-36. In terms of biological role, retina-specific kinase involved in the shutoff of the photoresponse and adaptation to changing light conditions via cone opsin phosphorylation, including rhodopsin (RHO). The protein is Rhodopsin kinase GRK7 (GRK7) of Homo sapiens (Human).